The following is a 178-amino-acid chain: Methyltransferase flvH (178 aa).

The region spanning 120–136 (QPFNCFCGSQNCLGLIA) is the Post-SET domain. Residues C124, C126, and C131 each contribute to the Zn(2+) site.

Belongs to the class V-like SAM-binding methyltransferase superfamily.

It catalyses the reaction L-lysine + 2 S-adenosyl-L-methionine = N(6),N(6)-dimethyl-L-lysine + 2 S-adenosyl-L-homocysteine + 2 H(+). The protein operates within secondary metabolite biosynthesis; terpenoid biosynthesis. Its function is as follows. Methyltransferase; part of the gene cluster that mediates the biosynthesis of flavunoidine, an alkaloidal terpenoid with a tetracyclic cage-like core connected to dimethylcadaverine via a C-N bond and acylated with 5,5-dimethyl-L-pipecolate. The tetracyclic core is synthesized by the terpene cyclase flvE and the cytochrome P450 monooxygenase flvD. The terpene cyclase flvE catalyzes the cyclization of farnesyl pyrophosphate (FPP) to form (1R,4R,5S)-(+)-acoradiene and the cytochrome P450 monooxygenase flvD is then responsible for oxidative conversion of (1R,4R,5S)-(+)-acoradiene into the tetracyclic cage present in the final product flavunoidine. In parallel, the N-methyltransferase flvH dimethylates L-lysine to give N,N-dimethyl-L-Lysin which is decarboxylated by flvG to afford dimethylcadaverine. The terpene cyclase-like protein flvF is the enzyme that attaches the dimethylcadaverine precusor at the C-7 of the tetracyclic cage to yield pre-flavunoidine. The cytochrome monooxygenase flvC hydroxylates the C-10 position of pre-flavunoidine whereas the NRPS flvI acylates the terpenoid core at the hydroxylated C-10 with dimethylpipecolate to yield final flavunoidine. The bifunctional enzyme flvA and the dehydrogenase flvB are responsible for the synthesis of the dimethylpipecolate precursor. The PLP-dependent lyase domain of flvA might use L-O-acetyl-homoserine and alpha-keto-isovalerate to form an intermediary ketone that can cyclize intramolecularly to yield an imine. The imine can be reduced by flvB to yield the 6-carboxylated pipecolate. The C-terminal alpha-KG-dependent oxygenase domain of flvA is then proposed to catalyze the decarboxylation to yield dimethylpipecolate. This is Methyltransferase flvH from Aspergillus flavus (strain ATCC 200026 / FGSC A1120 / IAM 13836 / NRRL 3357 / JCM 12722 / SRRC 167).